The following is a 920-amino-acid chain: Isoleucine--tRNA ligase (920 aa).

The 'HIGH' region motif lies at 58 to 68 (PYANGHLHLGH). Residue Glu-569 coordinates L-isoleucyl-5'-AMP. Residues 610–614 (KMSKS) carry the 'KMSKS' region motif. Lys-613 contacts ATP. Residues Cys-895, Cys-898, Cys-910, and Cys-913 each coordinate Zn(2+).

The protein belongs to the class-I aminoacyl-tRNA synthetase family. IleS type 1 subfamily. In terms of assembly, monomer. Requires Zn(2+) as cofactor.

It is found in the cytoplasm. The catalysed reaction is tRNA(Ile) + L-isoleucine + ATP = L-isoleucyl-tRNA(Ile) + AMP + diphosphate. Functionally, catalyzes the attachment of isoleucine to tRNA(Ile). As IleRS can inadvertently accommodate and process structurally similar amino acids such as valine, to avoid such errors it has two additional distinct tRNA(Ile)-dependent editing activities. One activity is designated as 'pretransfer' editing and involves the hydrolysis of activated Val-AMP. The other activity is designated 'posttransfer' editing and involves deacylation of mischarged Val-tRNA(Ile). This Helicobacter pylori (strain HPAG1) protein is Isoleucine--tRNA ligase.